The sequence spans 465 residues: Cysteine--tRNA ligase (465 aa).

C27 lines the Zn(2+) pocket. Positions 29 to 39 (PTVYNFFHIGN) match the 'HIGH' region motif. Residues C207, H232, and E236 each contribute to the Zn(2+) site. Positions 264–268 (KMSKS) match the 'KMSKS' region motif. Residue K267 participates in ATP binding.

This sequence belongs to the class-I aminoacyl-tRNA synthetase family. Monomer. It depends on Zn(2+) as a cofactor.

The protein resides in the cytoplasm. The catalysed reaction is tRNA(Cys) + L-cysteine + ATP = L-cysteinyl-tRNA(Cys) + AMP + diphosphate. The sequence is that of Cysteine--tRNA ligase from Clostridium kluyveri (strain NBRC 12016).